We begin with the raw amino-acid sequence, 130 residues long: Aspartate 1-decarboxylase (130 aa).

Ser-25 serves as the catalytic Schiff-base intermediate with substrate; via pyruvic acid. At Ser-25 the chain carries Pyruvic acid (Ser). Position 57 (Thr-57) interacts with substrate. Tyr-58 (proton donor) is an active-site residue. A substrate-binding site is contributed by 73–75 (GAA).

Belongs to the PanD family. In terms of assembly, heterooctamer of four alpha and four beta subunits. Requires pyruvate as cofactor. Post-translationally, is synthesized initially as an inactive proenzyme, which is activated by self-cleavage at a specific serine bond to produce a beta-subunit with a hydroxyl group at its C-terminus and an alpha-subunit with a pyruvoyl group at its N-terminus.

The protein resides in the cytoplasm. The enzyme catalyses L-aspartate + H(+) = beta-alanine + CO2. The protein operates within cofactor biosynthesis; (R)-pantothenate biosynthesis; beta-alanine from L-aspartate: step 1/1. Catalyzes the pyruvoyl-dependent decarboxylation of aspartate to produce beta-alanine. In Myxococcus xanthus (strain DK1622), this protein is Aspartate 1-decarboxylase.